A 274-amino-acid chain; its full sequence is Rhamnulose-1-phosphate aldolase (274 aa).

Glu-117 is a catalytic residue. Zn(2+)-binding residues include His-141, His-143, and His-212.

It belongs to the aldolase class II family. RhaD subfamily. In terms of assembly, homotetramer. Zn(2+) serves as cofactor.

It is found in the cytoplasm. It catalyses the reaction L-rhamnulose 1-phosphate = (S)-lactaldehyde + dihydroxyacetone phosphate. It participates in carbohydrate degradation; L-rhamnose degradation; glycerone phosphate from L-rhamnose: step 3/3. Catalyzes the reversible cleavage of L-rhamnulose-1-phosphate to dihydroxyacetone phosphate (DHAP) and L-lactaldehyde. The sequence is that of Rhamnulose-1-phosphate aldolase from Escherichia coli O157:H7.